A 376-amino-acid polypeptide reads, in one-letter code: Cyclin-dependent kinase 9-A (376 aa).

A Protein kinase domain is found at 19-319; it reads YERLAKIGQG…SDDALNNDFF (301 aa). ATP contacts are provided by residues 25–33 and Lys48; that span reads IGQGTFGEV. Asp153 serves as the catalytic Proton acceptor. A disordered region spans residues 345-376; sequence PPRRRGGHMPQQPANQARNPAATNQSEFERVF. Positions 354–369 are enriched in low complexity; the sequence is PQQPANQARNPAATNQ.

It belongs to the protein kinase superfamily. CMGC Ser/Thr protein kinase family. CDC2/CDKX subfamily. Associates with cyclin-T to form P-TEFb.

It is found in the nucleus. It catalyses the reaction L-seryl-[protein] + ATP = O-phospho-L-seryl-[protein] + ADP + H(+). The catalysed reaction is L-threonyl-[protein] + ATP = O-phospho-L-threonyl-[protein] + ADP + H(+). It carries out the reaction [DNA-directed RNA polymerase] + ATP = phospho-[DNA-directed RNA polymerase] + ADP + H(+). Its function is as follows. Member of the cyclin-dependent kinase pair (CDK9/cyclin-T) complex, also called positive transcription elongation factor B (P-TEFb), which is proposed to facilitate the transition from abortive to production elongation by phosphorylating the CTD (C-terminal domain) of the large subunit of RNA polymerase II (RNAP II) and SUPT5H. The sequence is that of Cyclin-dependent kinase 9-A (cdk9-a) from Xenopus laevis (African clawed frog).